A 197-amino-acid chain; its full sequence is MKQFIDFIPLLLFFIVYKLDPRPMEVAGHHFEFGGIYSATAMLIISSLVVYGALFLRQRKLEKGQWLTLIACLVFGGLTLTFHSETFLKWKAPVVNWLFALGFAGSHFIGDRVLIKRIMGHALTLPDAIWTRLNLAWIAFFLFCGAANLFVAFTFQDFWVDFKVFGSLGMTVIFLVAQGVYLSRHLHDDPSTSKPKD.

The next 5 membrane-spanning stretches (helical) occupy residues 36-56 (IYSA…ALFL), 64-84 (GQWL…TFHS), 90-110 (WKAP…HFIG), 135-155 (LAWI…AFTF), and 162-182 (FKVF…GVYL).

This sequence belongs to the YciB family.

The protein resides in the cell inner membrane. Its function is as follows. Plays a role in cell envelope biogenesis, maintenance of cell envelope integrity and membrane homeostasis. In Pseudomonas putida (strain ATCC 700007 / DSM 6899 / JCM 31910 / BCRC 17059 / LMG 24140 / F1), this protein is Inner membrane-spanning protein YciB.